A 246-amino-acid chain; its full sequence is Proteasome subunit alpha type-6-A (246 aa).

This sequence belongs to the peptidase T1A family. In terms of assembly, component of the 20S core complex of the 26S proteasome. The 26S proteasome is composed of a core protease (CP), known as the 20S proteasome, capped at one or both ends by the 19S regulatory particle (RP/PA700). The 20S proteasome core is composed of 28 subunits that are arranged in four stacked rings, resulting in a barrel-shaped structure. The two end rings are each formed by seven alpha subunits, and the two central rings are each formed by seven beta subunits. The catalytic chamber with the active sites is on the inside of the barrel. In terms of tissue distribution, ubiquitous low levels, higher expression in siliques and flowers.

It is found in the cytoplasm. The protein resides in the nucleus. Functionally, the proteasome is a multicatalytic proteinase complex which is characterized by its ability to cleave peptides with Arg, Phe, Tyr, Leu, and Glu adjacent to the leaving group at neutral or slightly basic pH. The proteasome has an ATP-dependent proteolytic activity. This is Proteasome subunit alpha type-6-A (PAA1) from Arabidopsis thaliana (Mouse-ear cress).